A 274-amino-acid chain; its full sequence is 4-hydroxy-tetrahydrodipicolinate reductase (274 aa).

12–17 (GAAGRM) lines the NAD(+) pocket. Residue Arg39 coordinates NADP(+). NAD(+)-binding positions include 102–104 (GTT) and 126–129 (SGNM). The active-site Proton donor/acceptor is the His160. His161 contributes to the (S)-2,3,4,5-tetrahydrodipicolinate binding site. The Proton donor role is filled by Lys164. Residue 170 to 171 (GT) coordinates (S)-2,3,4,5-tetrahydrodipicolinate.

The protein belongs to the DapB family.

It is found in the cytoplasm. It catalyses the reaction (S)-2,3,4,5-tetrahydrodipicolinate + NAD(+) + H2O = (2S,4S)-4-hydroxy-2,3,4,5-tetrahydrodipicolinate + NADH + H(+). The enzyme catalyses (S)-2,3,4,5-tetrahydrodipicolinate + NADP(+) + H2O = (2S,4S)-4-hydroxy-2,3,4,5-tetrahydrodipicolinate + NADPH + H(+). The protein operates within amino-acid biosynthesis; L-lysine biosynthesis via DAP pathway; (S)-tetrahydrodipicolinate from L-aspartate: step 4/4. In terms of biological role, catalyzes the conversion of 4-hydroxy-tetrahydrodipicolinate (HTPA) to tetrahydrodipicolinate. The polypeptide is 4-hydroxy-tetrahydrodipicolinate reductase (Rhizobium rhizogenes (strain K84 / ATCC BAA-868) (Agrobacterium radiobacter)).